The sequence spans 223 residues: Uracil-DNA glycosylase (223 aa).

The active-site Proton acceptor is Asp-67.

This sequence belongs to the uracil-DNA glycosylase (UDG) superfamily. UNG family.

It localises to the cytoplasm. It catalyses the reaction Hydrolyzes single-stranded DNA or mismatched double-stranded DNA and polynucleotides, releasing free uracil.. In terms of biological role, excises uracil residues from the DNA which can arise as a result of misincorporation of dUMP residues by DNA polymerase or due to deamination of cytosine. The protein is Uracil-DNA glycosylase of Borrelia hermsii (strain HS1 / DAH).